The sequence spans 581 residues: Bifunctional lycopene cyclase/phytoene synthase (581 aa).

The tract at residues 1-243 (MGFDYALVHL…IVFGQLAFDN (243 aa)) is lycopene beta-cyclase. Transmembrane regions (helical) follow at residues 3–23 (FDYA…LTLL), 35–55 (KVAF…SYLI), 65–85 (HVII…FFVV), 120–140 (LKRL…WFCV), 152–172 (ILIW…QFII), 173–193 (GLPF…LWIV), and 221–241 (IEEA…QLAF). The tract at residues 250–581 (AFPHLFPDPS…RVLVAWRTLN (332 aa)) is phytoene synthase.

It in the N-terminal section; belongs to the lycopene beta-cyclase family. In the C-terminal section; belongs to the phytoene/squalene synthase family.

It localises to the membrane. The catalysed reaction is all-trans-lycopene = gamma-carotene. It catalyses the reaction gamma-carotene = all-trans-beta-carotene. It carries out the reaction 2 (2E,6E,10E)-geranylgeranyl diphosphate = 15-cis-phytoene + 2 diphosphate. The protein operates within carotenoid biosynthesis; beta-carotene biosynthesis. Its pathway is carotenoid biosynthesis; phytoene biosynthesis; all-trans-phytoene from geranylgeranyl diphosphate: step 1/1. Bifunctional enzyme that catalyzes the reactions from geranylgeranyl diphosphate to phytoene (phytoene synthase) and lycopene to beta-carotene via the intermediate gamma-carotene (lycopene cyclase). In Leptosphaeria maculans (strain JN3 / isolate v23.1.3 / race Av1-4-5-6-7-8) (Blackleg fungus), this protein is Bifunctional lycopene cyclase/phytoene synthase.